The chain runs to 101 residues: Nucleoid-associated protein Bind_0255 (101 aa).

Belongs to the YbaB/EbfC family. In terms of assembly, homodimer.

Its subcellular location is the cytoplasm. The protein resides in the nucleoid. Functionally, binds to DNA and alters its conformation. May be involved in regulation of gene expression, nucleoid organization and DNA protection. In Beijerinckia indica subsp. indica (strain ATCC 9039 / DSM 1715 / NCIMB 8712), this protein is Nucleoid-associated protein Bind_0255.